Here is a 716-residue protein sequence, read N- to C-terminus: Phospholipid phosphatase-related protein type 3 (716 aa).

Helical transmembrane passes span 18-38 (LPCF…SLYF), 70-90 (LIPL…SIMV), and 131-151 (FVGV…VIQL). Asn-167 carries an N-linked (GlcNAc...) asparagine glycan. 3 helical membrane-spanning segments follow: residues 205 to 225 (HATL…SVIS), 231 to 251 (LKPI…LTQI), and 261 to 281 (VYAG…HAVG). The disordered stretch occupies residues 311–334 (SMYQQNKSVSTDELGPPGRLEGVP). The segment covering 312 to 321 (MYQQNKSVST) has biased composition (polar residues). An N-linked (GlcNAc...) asparagine glycan is attached at Asn-316. A phosphoserine mark is found at Ser-320 and Ser-351. At Thr-374 the chain carries Phosphothreonine. Positions 416-488 (GRGLGLPDEA…RVILPPRPGP (73 aa)) are disordered. Residue Ser-426 is modified to Phosphoserine. Residues 437–460 (VAEEEEEEEEEEEEEEEEEEEEEG) are compositionally biased toward acidic residues. A Phosphoserine modification is found at Ser-506. The segment at 548–589 (AMSKAAGGPKAETASSSSASSDSSQYRSPSDRDSASIVTIDA) is disordered. The span at 562–575 (SSSSASSDSSQYRS) shows a compositional bias: low complexity. Position 641 is a phosphoserine (Ser-641). Positions 664–694 (GEGLPPPGASEGALGAGSRESTLRRQVGALG) are disordered.

It belongs to the PA-phosphatase related phosphoesterase family.

Its subcellular location is the membrane. The polypeptide is Phospholipid phosphatase-related protein type 3 (Rattus norvegicus (Rat)).